The sequence spans 711 residues: Probable cadmium-transporting ATPase (711 aa).

One can recognise an HMA domain in the interval 3-66 (EKTVYRVDGL…AGAFEHLKII (64 aa)). Cd(2+) contacts are provided by cysteine 14 and cysteine 17. 5 helical membrane passes run 89–109 (WRLL…IMNG), 111–131 (DFYL…YSLF), 151–171 (IAII…VVIL), 317–337 (TPAI…LFGG), and 347–367 (LSVL…VAIV). The active-site 4-aspartylphosphate intermediate is aspartate 398. A helical transmembrane segment spans residues 669–689 (VIKLIALLLVIPGWLTLWIAI).

The protein belongs to the cation transport ATPase (P-type) (TC 3.A.3) family. Type IB subfamily.

The protein resides in the cell membrane. It carries out the reaction Cd(2+)(in) + ATP + H2O = Cd(2+)(out) + ADP + phosphate + H(+). In terms of biological role, couples the hydrolysis of ATP with the export of cadmium. This is Probable cadmium-transporting ATPase (cadA) from Listeria monocytogenes.